Here is a 619-residue protein sequence, read N- to C-terminus: Dihydroxy-acid dehydratase (619 aa).

Asp-81 provides a ligand contact to Mg(2+). A [2Fe-2S] cluster-binding site is contributed by Cys-122. 2 residues coordinate Mg(2+): Asp-123 and Lys-124. Lys-124 is subject to N6-carboxylysine. Residue Cys-195 participates in [2Fe-2S] cluster binding. Glu-494 provides a ligand contact to Mg(2+). Ser-520 (proton acceptor) is an active-site residue.

This sequence belongs to the IlvD/Edd family. Homodimer. Requires [2Fe-2S] cluster as cofactor. It depends on Mg(2+) as a cofactor.

The enzyme catalyses (2R)-2,3-dihydroxy-3-methylbutanoate = 3-methyl-2-oxobutanoate + H2O. It carries out the reaction (2R,3R)-2,3-dihydroxy-3-methylpentanoate = (S)-3-methyl-2-oxopentanoate + H2O. Its pathway is amino-acid biosynthesis; L-isoleucine biosynthesis; L-isoleucine from 2-oxobutanoate: step 3/4. The protein operates within amino-acid biosynthesis; L-valine biosynthesis; L-valine from pyruvate: step 3/4. In terms of biological role, functions in the biosynthesis of branched-chain amino acids. Catalyzes the dehydration of (2R,3R)-2,3-dihydroxy-3-methylpentanoate (2,3-dihydroxy-3-methylvalerate) into 2-oxo-3-methylpentanoate (2-oxo-3-methylvalerate) and of (2R)-2,3-dihydroxy-3-methylbutanoate (2,3-dihydroxyisovalerate) into 2-oxo-3-methylbutanoate (2-oxoisovalerate), the penultimate precursor to L-isoleucine and L-valine, respectively. This chain is Dihydroxy-acid dehydratase, found in Shewanella sp. (strain MR-4).